Consider the following 246-residue polypeptide: Outer membrane protein assembly factor BamD (246 aa).

An N-terminal signal peptide occupies residues 1-22 (MKKKNSIIFVFMILFFNSTVQS).

The protein belongs to the BamD family. In terms of assembly, part of the Bam complex.

It localises to the cell outer membrane. Functionally, part of the outer membrane protein assembly complex, which is involved in assembly and insertion of beta-barrel proteins into the outer membrane. The chain is Outer membrane protein assembly factor BamD from Buchnera aphidicola subsp. Acyrthosiphon pisum (strain APS) (Acyrthosiphon pisum symbiotic bacterium).